A 448-amino-acid polypeptide reads, in one-letter code: Phosphoglucosamine mutase (448 aa).

The active-site Phosphoserine intermediate is the serine 102. 4 residues coordinate Mg(2+): serine 102, aspartate 243, aspartate 245, and aspartate 247. Residue serine 102 is modified to Phosphoserine.

The protein belongs to the phosphohexose mutase family. It depends on Mg(2+) as a cofactor. Post-translationally, activated by phosphorylation.

The catalysed reaction is alpha-D-glucosamine 1-phosphate = D-glucosamine 6-phosphate. Its function is as follows. Catalyzes the conversion of glucosamine-6-phosphate to glucosamine-1-phosphate. This is Phosphoglucosamine mutase from Parvibaculum lavamentivorans (strain DS-1 / DSM 13023 / NCIMB 13966).